Reading from the N-terminus, the 160-residue chain is Small ribosomal subunit protein uS19 (160 aa).

The segment at 1–27 (MARQKFSGKGGKGKSKKGQQSTAPRRR) is disordered.

The protein belongs to the universal ribosomal protein uS19 family.

Protein S19 forms a complex with S13 that binds strongly to the 16S ribosomal RNA. In Methanococcus vannielii (strain ATCC 35089 / DSM 1224 / JCM 13029 / OCM 148 / SB), this protein is Small ribosomal subunit protein uS19.